Consider the following 198-residue polypeptide: Holliday junction branch migration complex subunit RuvA (198 aa).

The tract at residues 1-63 (MYDYIKGQLT…EDAHLLFGFH (63 aa)) is domain I. The interval 64-142 (TKDEKDVFLK…EAPQETGNTK (79 aa)) is domain II. Residues 143–147 (ARSNK) are flexible linker. The segment at 148–198 (AGNTQLDEAIEALLALGYKATELKKIRAFFEGTSETAEQYIKSALKLLMKG) is domain III.

The protein belongs to the RuvA family. In terms of assembly, homotetramer. Forms an RuvA(8)-RuvB(12)-Holliday junction (HJ) complex. HJ DNA is sandwiched between 2 RuvA tetramers; dsDNA enters through RuvA and exits via RuvB. An RuvB hexamer assembles on each DNA strand where it exits the tetramer. Each RuvB hexamer is contacted by two RuvA subunits (via domain III) on 2 adjacent RuvB subunits; this complex drives branch migration. In the full resolvosome a probable DNA-RuvA(4)-RuvB(12)-RuvC(2) complex forms which resolves the HJ.

The protein localises to the cytoplasm. The RuvA-RuvB-RuvC complex processes Holliday junction (HJ) DNA during genetic recombination and DNA repair, while the RuvA-RuvB complex plays an important role in the rescue of blocked DNA replication forks via replication fork reversal (RFR). RuvA specifically binds to HJ cruciform DNA, conferring on it an open structure. The RuvB hexamer acts as an ATP-dependent pump, pulling dsDNA into and through the RuvAB complex. HJ branch migration allows RuvC to scan DNA until it finds its consensus sequence, where it cleaves and resolves the cruciform DNA. The protein is Holliday junction branch migration complex subunit RuvA of Streptococcus pyogenes serotype M18 (strain MGAS8232).